We begin with the raw amino-acid sequence, 314 residues long: Homoserine kinase (314 aa).

95 to 105 contacts ATP; that stretch reads PHSRGLGSSAS.

The protein belongs to the GHMP kinase family. Homoserine kinase subfamily.

The protein resides in the cytoplasm. The enzyme catalyses L-homoserine + ATP = O-phospho-L-homoserine + ADP + H(+). The protein operates within amino-acid biosynthesis; L-threonine biosynthesis; L-threonine from L-aspartate: step 4/5. Functionally, catalyzes the ATP-dependent phosphorylation of L-homoserine to L-homoserine phosphate. This is Homoserine kinase from Rhodococcus erythropolis (strain PR4 / NBRC 100887).